The sequence spans 89 residues: U-scoloptoxin(12)-Er1a (89 aa).

The N-terminal stretch at 1–22 (MKGLFLVVFLMWFVSQMNTEET) is a signal peptide.

This sequence belongs to the scoloptoxin-12 family. In terms of processing, contains 3 disulfide bonds. In terms of tissue distribution, expressed by the venom gland.

The protein resides in the secreted. This is U-scoloptoxin(12)-Er1a from Ethmostigmus rubripes (Giant centipede).